A 493-amino-acid chain; its full sequence is MQKIKLTGLSLIISGLLMAQAQAAEPVYPDQLRLFSLGQGVCGDKYRPVNREEAQSVKSNIVGMMGQWQISGLANGWVIMGPGYNGEIKPGTASNTWCYPTNPVTGEIPTLSALDIPDGDEVDVQWRLVHDSANFIKPTSYLAHYLGYAWVGGNHSQYVGEDMDVTRDGDGWVIRGNNDGGCDGYRCGDKTAIKVSNFAYNLDPDSFKHGDVTQSDRQLVKTVVGWAVNDSDTPQSGYDVTLRYDTATNWSKTNTYGLSEKVTTKNKFKWPLVGETELSIEIAANQSWASQNGGSTTTSLSQSVRPTVPARSKIPVKIELYKADISYPYEFKADVSYDLTLSGFLRWGGNAWYTHPDNRPNWNHTFVIGPYKDKASSIRYQWDKRYIPGEVKWWDWNWTIQQNGLSTMQNNLARVLRPVRAGITGDFSAESQFAGNIEIGAPVPLAADSKVRRARSVDGAGQGLRLEIPLDAQELSGLGFNNVSLSVTPAANQ.

The N-terminal stretch at 1–23 (MQKIKLTGLSLIISGLLMAQAQA) is a signal peptide. 2 disulfide bridges follow: cysteine 42–cysteine 98 and cysteine 182–cysteine 187. Positions 68 to 84 (WQISGLANGWVIMGPGY) are interaction with host N-linked glycan. The interval 256-288 (YGLSEKVTTKNKFKWPLVGETELSIEIAANQSW) is part of the transmembrane beta-barrel after proteolytic activation of the toxin and insertion into the host membrane. An interaction with glycans from host GPI-anchor region spans residues 346 to 355 (RWGGNAWYTH). A propeptide spanning residues 446–493 (AADSKVRRARSVDGAGQGLRLEIPLDAQELSGLGFNNVSLSVTPAANQ) is cleaved from the precursor.

It belongs to the aerolysin family. As to quaternary structure, homodimer in solution; homoheptamer in the host membrane. After binding to GPI-anchored proteins in target membranes and proteolytic removal of the C-terminal propeptide, the protein assembles into a heptameric pre-pore complex. A further conformation change leads to insertion into the host membrane. In terms of processing, proteolytic cleavage and subsequent release of the propeptide trigger a major conformation change, leading to the formation of a heptameric pre-pore that then inserts into the host membrane.

Its subcellular location is the secreted. It is found in the host cell membrane. In terms of biological role, secreted, cytolytic toxin that forms pores in host membranes after proteolytic removal of a C-terminal propeptide, leading to destruction of the membrane permeability barrier and host cell death. The pores are formed by transmembrane beta-strands and are approximately 3 nm in diameter. In Aeromonas hydrophila, this protein is Aerolysin (aerA).